We begin with the raw amino-acid sequence, 366 residues long: Cytochrome c peroxidase, mitochondrial (366 aa).

The active-site Proton acceptor is His123. The span at 195–206 (IEWRPGRVDDNT) shows a compositional bias: basic and acidic residues. The tract at residues 195 to 218 (IEWRPGRVDDNTASKVPPNGRLPD) is disordered. His247 contacts heme b. Trp263 acts as the Tryptophan radical intermediate in catalysis.

It belongs to the peroxidase family. Cytochrome c peroxidase subfamily. In terms of assembly, forms a one-to-one complex with cytochrome c. It depends on heme b as a cofactor.

It localises to the mitochondrion matrix. It is found in the mitochondrion intermembrane space. The catalysed reaction is 2 Fe(II)-[cytochrome c] + H2O2 + 2 H(+) = 2 Fe(III)-[cytochrome c] + 2 H2O. Its function is as follows. Destroys radicals which are normally produced within the cells and which are toxic to biological systems. This chain is Cytochrome c peroxidase, mitochondrial (CCP1), found in Candida albicans (strain SC5314 / ATCC MYA-2876) (Yeast).